The sequence spans 634 residues: Pescadillo homolog (634 aa).

In terms of domain architecture, BRCT spans 321–414 (RLRTLFKGLK…QLLPTNKYFM (94 aa)). 3 disordered regions span residues 437–473 (EEKA…EEIE), 491–561 (EYKK…RKAE), and 603–634 (NIDA…LKMA). The residue at position 453 (Ser453) is a Phosphoserine. 2 stretches are compositionally biased toward acidic residues: residues 454 to 473 (DDDD…EEIE) and 501 to 527 (VNED…DVEQ). Coiled-coil stretches lie at residues 460–546 (SDAE…KVES) and 596–629 (LLRK…AAAK). Basic and acidic residues-rich tracts occupy residues 528-548 (LDDK…ESGK) and 603-623 (NIDA…KKAA). The span at 624-634 (AEAAAKALKMA) shows a compositional bias: low complexity.

It belongs to the pescadillo family.

The protein resides in the nucleus. The protein localises to the nucleolus. It localises to the nucleoplasm. Required for maturation of ribosomal RNAs and formation of the large ribosomal subunit. This Drosophila willistoni (Fruit fly) protein is Pescadillo homolog.